The sequence spans 125 residues: Homeobox protein HD-8 (125 aa).

A DNA-binding region (homeobox) is located at residues 30-89; sequence EPDTRTRKTTFQMMVLKEVFKIAPHPSTLTKADLALMIKLPLKAVQIWFQNERSRKERGG.

The protein localises to the nucleus. In Encephalitozoon cuniculi (strain GB-M1) (Microsporidian parasite), this protein is Homeobox protein HD-8 (HD-8).